The chain runs to 86 residues: MNSLLMITACLVVIGTVWAKEGYLVDVKGCKKNCWKLGDNDYCNRECKWKHIGGSYGYCYGFGCYCEGLPDSTQTWPLPNKTCGKK.

The first 19 residues, 1 to 19 (MNSLLMITACLVVIGTVWA), serve as a signal peptide directing secretion. The region spanning 20–84 (KEGYLVDVKG…TWPLPNKTCG (65 aa)) is the LCN-type CS-alpha/beta domain. 4 disulfides stabilise this stretch: Cys30–Cys83, Cys34–Cys59, Cys43–Cys64, and Cys47–Cys66. Cys83 bears the Cysteine amide mark.

It belongs to the long (4 C-C) scorpion toxin superfamily. Sodium channel inhibitor family. Beta subfamily. As to expression, expressed by the venom gland.

It localises to the secreted. Functionally, binds to sodium channels (Nav) and inhibits the inactivation of the activated channels, thereby blocking neuronal transmission. The sequence is that of Neurotoxin E1x from Centruroides sculpturatus (Arizona bark scorpion).